A 65-amino-acid polypeptide reads, in one-letter code: Large ribosomal subunit protein bL35 (65 aa).

Residues 1-22 form a disordered region; sequence MPKLKTKSGAAKRFKKTGKGGF.

This sequence belongs to the bacterial ribosomal protein bL35 family.

The protein is Large ribosomal subunit protein bL35 of Francisella philomiragia subsp. philomiragia (strain ATCC 25017 / CCUG 19701 / FSC 153 / O#319-036).